The primary structure comprises 329 residues: MNPVDYLRISLIDRCNFRCHYCVPDEASLQYLLTSEQLSNGEILTLLEQVFIPLGFRKFRLTGGEPLLRPQLVPLVRAIAHLPGVEDLSMTTNAYLLADLAQDLYNAGLNRLNISLDSLNPETFDQIIGNRGKSRWQQTWEGIQAAHRVGFDPLKLNVVVIPGVNDQEVLDLAALTGDRHWHVRFIEFMPIGNDKLFNERAWIPSEELRQRIRAKWGLETAFVQGNGPADIFKIPGAKGTLGFISQMSECFCDRCNRMRLSADGWLRPCLLNEAAQMDLKTLLRTGVPPREIRAAVKALLDQKPEINFKMRDMGTTTGQYGRTMSQIGG.

In terms of domain architecture, Radical SAM core spans 1 to 229; it reads MNPVDYLRIS…TAFVQGNGPA (229 aa). Arg8 contacts GTP. [4Fe-4S] cluster contacts are provided by Cys15 and Cys19. Tyr21 provides a ligand contact to S-adenosyl-L-methionine. Residue Cys22 coordinates [4Fe-4S] cluster. Arg60 lines the GTP pocket. Gly64 is a binding site for S-adenosyl-L-methionine. Residue Thr91 coordinates GTP. Ser115 contacts S-adenosyl-L-methionine. Lys155 provides a ligand contact to GTP. Met189 provides a ligand contact to S-adenosyl-L-methionine. [4Fe-4S] cluster-binding residues include Cys252 and Cys255. Position 257–259 (257–259) interacts with GTP; that stretch reads RMR. Cys269 contacts [4Fe-4S] cluster.

The protein belongs to the radical SAM superfamily. MoaA family. As to quaternary structure, monomer and homodimer. [4Fe-4S] cluster serves as cofactor.

It catalyses the reaction GTP + AH2 + S-adenosyl-L-methionine = (8S)-3',8-cyclo-7,8-dihydroguanosine 5'-triphosphate + 5'-deoxyadenosine + L-methionine + A + H(+). Its pathway is cofactor biosynthesis; molybdopterin biosynthesis. Catalyzes the cyclization of GTP to (8S)-3',8-cyclo-7,8-dihydroguanosine 5'-triphosphate. In Picosynechococcus sp. (strain ATCC 27264 / PCC 7002 / PR-6) (Agmenellum quadruplicatum), this protein is GTP 3',8-cyclase.